A 154-amino-acid polypeptide reads, in one-letter code: uncharacterized protein (154 aa).

The Zn(2+) site is built by cysteine 4, cysteine 7, cysteine 16, cysteine 19, cysteine 24, cysteine 28, histidine 32, and cysteine 36. An HIT-type zinc finger spans residues 4 to 36 (CSICNESEIKYKCPKCSFPYCSLPCWKIHQSQC).

This is an uncharacterized protein from Schizosaccharomyces pombe (strain 972 / ATCC 24843) (Fission yeast).